Here is a 241-residue protein sequence, read N- to C-terminus: MGQILYQLDDNSLTFPLIECALTEPNGLLALGGDLSPERLIAAYSQGIFPWYSDNDPLMWWSPNPRAIIDIDQLRINRTLRKAINKSPYQITLNQDFSQVTQLCANAPFRTDGTWILPEMEAAYLTLHQQGYAHSIEVWYTDEHDNKALVGGLYGVAVNGFFSGESMFYKQSNASKFALIALGQLLKSVDINFIDCQLLNPFLEDMGAKETSRDIFIHKQQHALTKTMPDDFWQPRTLTVI.

The protein belongs to the L/F-transferase family.

Its subcellular location is the cytoplasm. It carries out the reaction N-terminal L-lysyl-[protein] + L-leucyl-tRNA(Leu) = N-terminal L-leucyl-L-lysyl-[protein] + tRNA(Leu) + H(+). The enzyme catalyses N-terminal L-arginyl-[protein] + L-leucyl-tRNA(Leu) = N-terminal L-leucyl-L-arginyl-[protein] + tRNA(Leu) + H(+). The catalysed reaction is L-phenylalanyl-tRNA(Phe) + an N-terminal L-alpha-aminoacyl-[protein] = an N-terminal L-phenylalanyl-L-alpha-aminoacyl-[protein] + tRNA(Phe). Functions in the N-end rule pathway of protein degradation where it conjugates Leu, Phe and, less efficiently, Met from aminoacyl-tRNAs to the N-termini of proteins containing an N-terminal arginine or lysine. The chain is Leucyl/phenylalanyl-tRNA--protein transferase from Colwellia psychrerythraea (strain 34H / ATCC BAA-681) (Vibrio psychroerythus).